Reading from the N-terminus, the 59-residue chain is Large ribosomal subunit protein uL30 (59 aa).

This sequence belongs to the universal ribosomal protein uL30 family. In terms of assembly, part of the 50S ribosomal subunit.

In Leptospira borgpetersenii serovar Hardjo-bovis (strain JB197), this protein is Large ribosomal subunit protein uL30.